The sequence spans 135 residues: MPKKNKLPQGTIVLKTLTMRSDTNANGDIFGGWIMSQMDMGGAILAKEIAGGRVVTVQVNGITFFKPVSVGDIVSCYAHCIKTGNSSITINLEVWIKKIYSKPLGQFYCAAEAIFIYVAIDETGKPRELLPMSII.

One can recognise a HotDog ACOT-type domain in the interval 8 to 123 (PQGTIVLKTL…IFIYVAIDET (116 aa)).

Belongs to the acyl coenzyme A hydrolase family.

This is an uncharacterized protein from Buchnera aphidicola subsp. Schizaphis graminum (strain Sg).